A 191-amino-acid chain; its full sequence is dITP/XTP pyrophosphatase (191 aa).

Residue 8–13 participates in substrate binding; that stretch reads SKNQGK. Residues Glu38 and Asp67 each coordinate Mg(2+). Catalysis depends on Asp67, which acts as the Proton acceptor. Substrate-binding positions include Ser68, 146–149, Lys169, and 174–175; these read FGYD and HR.

It belongs to the HAM1 NTPase family. Homodimer. Mg(2+) is required as a cofactor.

The catalysed reaction is XTP + H2O = XMP + diphosphate + H(+). It carries out the reaction dITP + H2O = dIMP + diphosphate + H(+). The enzyme catalyses ITP + H2O = IMP + diphosphate + H(+). In terms of biological role, pyrophosphatase that catalyzes the hydrolysis of nucleoside triphosphates to their monophosphate derivatives, with a high preference for the non-canonical purine nucleotides XTP (xanthosine triphosphate), dITP (deoxyinosine triphosphate) and ITP. Seems to function as a house-cleaning enzyme that removes non-canonical purine nucleotides from the nucleotide pool, thus preventing their incorporation into DNA/RNA and avoiding chromosomal lesions. The protein is dITP/XTP pyrophosphatase of Prochlorococcus marinus subsp. pastoris (strain CCMP1986 / NIES-2087 / MED4).